The primary structure comprises 429 residues: Enolase (429 aa).

Q174 lines the (2R)-2-phosphoglycerate pocket. The active-site Proton donor is E218. Positions 254, 295, and 321 each coordinate Mg(2+). Residues K346, R375, S376, and K397 each coordinate (2R)-2-phosphoglycerate. K346 functions as the Proton acceptor in the catalytic mechanism.

This sequence belongs to the enolase family. It depends on Mg(2+) as a cofactor.

Its subcellular location is the cytoplasm. It is found in the secreted. It localises to the cell surface. The catalysed reaction is (2R)-2-phosphoglycerate = phosphoenolpyruvate + H2O. It functions in the pathway carbohydrate degradation; glycolysis; pyruvate from D-glyceraldehyde 3-phosphate: step 4/5. Functionally, catalyzes the reversible conversion of 2-phosphoglycerate (2-PG) into phosphoenolpyruvate (PEP). It is essential for the degradation of carbohydrates via glycolysis. In Methanosarcina acetivorans (strain ATCC 35395 / DSM 2834 / JCM 12185 / C2A), this protein is Enolase.